A 318-amino-acid chain; its full sequence is Taste receptor type 2 member 117 (318 aa).

Over Met1–Leu16 the chain is Extracellular. A helical membrane pass occupies residues Thr17–Val37. At His38–Gln53 the chain is on the cytoplasmic side. Residues Ile54 to Val74 traverse the membrane as a helical segment. The Extracellular portion of the chain corresponds to Ile75–Asn93. A helical membrane pass occupies residues Leu94–Phe114. The Cytoplasmic portion of the chain corresponds to Leu115 to Lys134. Residues Val135 to Asn155 form a helical membrane-spanning segment. Residues Leu156–His189 are Extracellular-facing. Asn168 carries N-linked (GlcNAc...) asparagine glycosylation. A helical membrane pass occupies residues Ile190 to Ser210. Topologically, residues Leu211–Gln238 are cytoplasmic. The chain crosses the membrane as a helical span at residues Thr239–Trp259. Over Lys260–Leu268 the chain is Extracellular. A helical transmembrane segment spans residues Phe269–Ile289. The Cytoplasmic segment spans residues Leu290–Leu318.

Belongs to the G-protein coupled receptor T2R family.

Its subcellular location is the membrane. Its function is as follows. Putative taste receptor which may play a role in the perception of bitterness. This Rattus norvegicus (Rat) protein is Taste receptor type 2 member 117.